A 422-amino-acid chain; its full sequence is Histidine--tRNA ligase (422 aa).

Belongs to the class-II aminoacyl-tRNA synthetase family. In terms of assembly, homodimer.

Its subcellular location is the cytoplasm. It catalyses the reaction tRNA(His) + L-histidine + ATP = L-histidyl-tRNA(His) + AMP + diphosphate + H(+). The protein is Histidine--tRNA ligase of Onion yellows phytoplasma (strain OY-M).